The following is a 249-amino-acid chain: tRNA pseudouridine synthase A (249 aa).

The active-site Nucleophile is Asp53. Tyr111 provides a ligand contact to substrate.

It belongs to the tRNA pseudouridine synthase TruA family. Homodimer.

It catalyses the reaction uridine(38/39/40) in tRNA = pseudouridine(38/39/40) in tRNA. Formation of pseudouridine at positions 38, 39 and 40 in the anticodon stem and loop of transfer RNAs. This chain is tRNA pseudouridine synthase A, found in Streptococcus mutans serotype c (strain ATCC 700610 / UA159).